Consider the following 650-residue polypeptide: MHNSTDKSVKERFLDLLSEQFNTKEALATEIINLESILELPKGTEHFVSDLHGEFHSFQHVLRNGSGNVRSKINDIFQDTLTRKEINEFSALVYYPEEKLQLIKNSFSSKSELNEWYITTINRLIKLITYASSKYTRTKLRKSLPENYVFIVEELLYKSNKYNNKHSYYETLIKQIIELEQSDDLIIGLSFTVQHLVVNHLHVVGDIYDRGPEPDKIMETLIDYPSVDIQWGNHDVLWIGAYAGSKVCLANLLRICARYDNLDIIEDAYGINLRPLLTLADKYYDGSNPAFRPKNAEGLSELELEQITKLHQAIAIIQFKLEAPIIKRRPAFEMEERLVLEKIDYDKNEATLYGKTYPLEHTCFQTVDPNDPNKLTDEEADVIDKLLLSVQQSEKLKRHMTFLMQKGKLYLPYNGNLLIHGCIPVDEQGEMESMVIDGVKCYGRDLLDHFEEYVRIAFDHKDIQDDLATDLVWYLWTGKYSSLFGKRAMTTFERYFIKDKTAHKETKNPYYYLREDVDMCKKMLKDFGLDPEQGHIINGHTPVKEIDGEDPIKADGKMIVIDGGFSKAYQSTTGIAGYTLLYNSFGMQLVAHQHFNSKKHVLLNGADELSIRRVVDKELQRKKIRDTNTGHEIQAQIDILKELMHDRFVN.

The protein belongs to the FBPase class 3 family. It depends on Mn(2+) as a cofactor.

The enzyme catalyses beta-D-fructose 1,6-bisphosphate + H2O = beta-D-fructose 6-phosphate + phosphate. The protein operates within carbohydrate biosynthesis; gluconeogenesis. The sequence is that of Fructose-1,6-bisphosphatase class 3 from Staphylococcus xylosus.